The chain runs to 407 residues: Accessory Sec system protein translocase subunit SecY2 (407 aa).

A run of 10 helical transmembrane segments spans residues 13-33, 65-85, 104-124, 133-153, 158-178, 190-210, 248-268, 287-307, 345-365, and 370-390; these read FLWT…TLPF, LFSV…MFAV, MLLT…NLPL, TTIM…LIWL, AAMG…AYIP, ISSL…YLAV, IMYA…IHFL, PAWF…FAFI, FALV…MVVL, and YLRL…VFSI.

It belongs to the SecY/SEC61-alpha family. SecY2 subfamily. As to quaternary structure, component of the accessory SecA2/SecY2 protein translocase complex required to export cell wall proteins. May form heterotrimers with SecE and SecG subunits.

It is found in the cell membrane. In terms of biological role, part of the accessory SecA2/SecY2 system specifically required for export of possible cell wall proteins. The central subunit of a protein translocation channel. In Streptococcus sanguinis (strain SK36), this protein is Accessory Sec system protein translocase subunit SecY2.